We begin with the raw amino-acid sequence, 334 residues long: Aspartate carbamoyltransferase catalytic subunit (334 aa).

2 residues coordinate carbamoyl phosphate: Arg71 and Thr72. Lys99 contacts L-aspartate. Residues Arg121, His151, and Gln154 each coordinate carbamoyl phosphate. Positions 184 and 239 each coordinate L-aspartate. Carbamoyl phosphate contacts are provided by Gly280 and Pro281.

This sequence belongs to the aspartate/ornithine carbamoyltransferase superfamily. ATCase family. Heterododecamer (2C3:3R2) of six catalytic PyrB chains organized as two trimers (C3), and six regulatory PyrI chains organized as three dimers (R2).

The catalysed reaction is carbamoyl phosphate + L-aspartate = N-carbamoyl-L-aspartate + phosphate + H(+). The protein operates within pyrimidine metabolism; UMP biosynthesis via de novo pathway; (S)-dihydroorotate from bicarbonate: step 2/3. Its function is as follows. Catalyzes the condensation of carbamoyl phosphate and aspartate to form carbamoyl aspartate and inorganic phosphate, the committed step in the de novo pyrimidine nucleotide biosynthesis pathway. In Pseudomonas savastanoi pv. phaseolicola (strain 1448A / Race 6) (Pseudomonas syringae pv. phaseolicola (strain 1448A / Race 6)), this protein is Aspartate carbamoyltransferase catalytic subunit.